A 226-amino-acid polypeptide reads, in one-letter code: tRNA (guanine-N(1)-)-methyltransferase (226 aa).

S-adenosyl-L-methionine is bound by residues Gly-112 and 132–137 (IGDYVL).

The protein belongs to the RNA methyltransferase TrmD family. In terms of assembly, homodimer.

It is found in the cytoplasm. It catalyses the reaction guanosine(37) in tRNA + S-adenosyl-L-methionine = N(1)-methylguanosine(37) in tRNA + S-adenosyl-L-homocysteine + H(+). In terms of biological role, specifically methylates guanosine-37 in various tRNAs. The protein is tRNA (guanine-N(1)-)-methyltransferase of Flavobacterium johnsoniae (strain ATCC 17061 / DSM 2064 / JCM 8514 / BCRC 14874 / CCUG 350202 / NBRC 14942 / NCIMB 11054 / UW101) (Cytophaga johnsonae).